Consider the following 141-residue polypeptide: D-aminoacyl-tRNA deacylase (141 aa).

A Gly-cisPro motif, important for rejection of L-amino acids motif is present at residues 133 to 134 (GP).

It belongs to the DTD family. In terms of assembly, homodimer.

The protein resides in the cytoplasm. It carries out the reaction glycyl-tRNA(Ala) + H2O = tRNA(Ala) + glycine + H(+). It catalyses the reaction a D-aminoacyl-tRNA + H2O = a tRNA + a D-alpha-amino acid + H(+). An aminoacyl-tRNA editing enzyme that deacylates mischarged D-aminoacyl-tRNAs. Also deacylates mischarged glycyl-tRNA(Ala), protecting cells against glycine mischarging by AlaRS. Acts via tRNA-based rather than protein-based catalysis; rejects L-amino acids rather than detecting D-amino acids in the active site. By recycling D-aminoacyl-tRNA to D-amino acids and free tRNA molecules, this enzyme counteracts the toxicity associated with the formation of D-aminoacyl-tRNA entities in vivo and helps enforce protein L-homochirality. The chain is D-aminoacyl-tRNA deacylase from Thermobifida fusca (strain YX).